Reading from the N-terminus, the 185-residue chain is Elongation factor P (185 aa).

It belongs to the elongation factor P family.

The protein resides in the cytoplasm. It participates in protein biosynthesis; polypeptide chain elongation. Functionally, involved in peptide bond synthesis. Stimulates efficient translation and peptide-bond synthesis on native or reconstituted 70S ribosomes in vitro. Probably functions indirectly by altering the affinity of the ribosome for aminoacyl-tRNA, thus increasing their reactivity as acceptors for peptidyl transferase. The sequence is that of Elongation factor P from Acaryochloris marina (strain MBIC 11017).